The following is a 272-amino-acid chain: WIMGHMVNDLEMVDYYVDKGANGLEIDITFNSNGIAEYTYHGVPCDCFRNCRRNTTLSTYLNYVRQLTTPGDQKFRQNLIFIIMDLKLNRLKSQALFNAGLSIADRLTQYYWKDDGKARAYFLLSVPYVRQAAFIRGFQSRFEEKGLKKYYEKIGWDFSANEDLNRIREAYQKLNISGHIWQSDGITNCLTRRTRRLKEAIRKRDSPGWYINKVYSWSLDRYKSIKYALDLGVDGVMSNYADRLVKILSKGTYKRRFRLATHEDNPWETFTP.

Residue His-5 is part of the active site. The Mg(2+) site is built by Glu-25 and Asp-27. The active-site Nucleophile is the His-41. Cystine bridges form between Cys-45–Cys-51 and Cys-47–Cys-189. A Mg(2+)-binding site is contributed by Asp-85.

Belongs to the arthropod phospholipase D family. Class II subfamily. The cofactor is Mg(2+). In terms of tissue distribution, expressed by the venom gland.

Its subcellular location is the secreted. It carries out the reaction an N-(acyl)-sphingosylphosphocholine = an N-(acyl)-sphingosyl-1,3-cyclic phosphate + choline. The catalysed reaction is an N-(acyl)-sphingosylphosphoethanolamine = an N-(acyl)-sphingosyl-1,3-cyclic phosphate + ethanolamine. The enzyme catalyses a 1-acyl-sn-glycero-3-phosphocholine = a 1-acyl-sn-glycero-2,3-cyclic phosphate + choline. It catalyses the reaction a 1-acyl-sn-glycero-3-phosphoethanolamine = a 1-acyl-sn-glycero-2,3-cyclic phosphate + ethanolamine. In terms of biological role, dermonecrotic toxins cleave the phosphodiester linkage between the phosphate and headgroup of certain phospholipids (sphingolipid and lysolipid substrates), forming an alcohol (often choline) and a cyclic phosphate. This toxin acts on sphingomyelin (SM). It may also act on ceramide phosphoethanolamine (CPE), lysophosphatidylcholine (LPC) and lysophosphatidylethanolamine (LPE), but not on lysophosphatidylserine (LPS), and lysophosphatidylglycerol (LPG). It acts by transphosphatidylation, releasing exclusively cyclic phosphate products as second products. Induces dermonecrosis, hemolysis, increased vascular permeability, edema, inflammatory response, and platelet aggregation. The polypeptide is Dermonecrotic toxin StSicTox-betaIF1 (Sicarius terrosus (Cave spider)).